The sequence spans 612 residues: tRNA 5-methylaminomethyl-2-thiouridine biosynthesis bifunctional protein MnmC (612 aa).

Residues 1 to 218 are tRNA (mnm(5)s(2)U34)-methyltransferase; it reads MITFRGDGLY…KREILEASLE (218 aa). Residues 244–612 form an FAD-dependent cmnm(5)s(2)U34 oxidoreductase region; it reads IGAGVAGLAA…VRKLKRGLVR (369 aa).

This sequence in the N-terminal section; belongs to the methyltransferase superfamily. tRNA (mnm(5)s(2)U34)-methyltransferase family. It in the C-terminal section; belongs to the DAO family. FAD serves as cofactor.

It localises to the cytoplasm. It catalyses the reaction 5-aminomethyl-2-thiouridine(34) in tRNA + S-adenosyl-L-methionine = 5-methylaminomethyl-2-thiouridine(34) in tRNA + S-adenosyl-L-homocysteine + H(+). Functionally, catalyzes the last two steps in the biosynthesis of 5-methylaminomethyl-2-thiouridine (mnm(5)s(2)U) at the wobble position (U34) in tRNA. Catalyzes the FAD-dependent demodification of cmnm(5)s(2)U34 to nm(5)s(2)U34, followed by the transfer of a methyl group from S-adenosyl-L-methionine to nm(5)s(2)U34, to form mnm(5)s(2)U34. The polypeptide is tRNA 5-methylaminomethyl-2-thiouridine biosynthesis bifunctional protein MnmC (Campylobacter fetus subsp. fetus (strain 82-40)).